A 400-amino-acid polypeptide reads, in one-letter code: Argininosuccinate synthase (400 aa).

9–17 contributes to the ATP binding site; that stretch reads AYSGGLDTS. Tyr87 contributes to the L-citrulline binding site. Gly117 contributes to the ATP binding site. Thr119, Asn123, and Asp124 together coordinate L-aspartate. Asn123 lines the L-citrulline pocket. L-citrulline-binding residues include Arg127, Ser176, Ser185, Glu261, and Tyr273.

This sequence belongs to the argininosuccinate synthase family. Type 1 subfamily. In terms of assembly, homotetramer.

Its subcellular location is the cytoplasm. It carries out the reaction L-citrulline + L-aspartate + ATP = 2-(N(omega)-L-arginino)succinate + AMP + diphosphate + H(+). The protein operates within amino-acid biosynthesis; L-arginine biosynthesis; L-arginine from L-ornithine and carbamoyl phosphate: step 2/3. The polypeptide is Argininosuccinate synthase (Chlorobium luteolum (strain DSM 273 / BCRC 81028 / 2530) (Pelodictyon luteolum)).